The chain runs to 465 residues: Ribulose bisphosphate carboxylase large chain (465 aa).

Residue Lys4 is modified to N6,N6,N6-trimethyllysine. Residues Asn113 and Thr163 each contribute to the substrate site. The active-site Proton acceptor is the Lys165. Substrate is bound at residue Lys167. The Mg(2+) site is built by Lys191, Asp193, and Glu194. An N6-carboxylysine modification is found at Lys191. His284 functions as the Proton acceptor in the catalytic mechanism. Arg285, His317, and Ser369 together coordinate substrate.

This sequence belongs to the RuBisCO large chain family. Type I subfamily. Heterohexadecamer of 8 large chains and 8 small chains; disulfide-linked. The disulfide link is formed within the large subunit homodimers. Mg(2+) is required as a cofactor. Post-translationally, the disulfide bond which can form in the large chain dimeric partners within the hexadecamer appears to be associated with oxidative stress and protein turnover.

The protein localises to the plastid. Its subcellular location is the chloroplast. The catalysed reaction is 2 (2R)-3-phosphoglycerate + 2 H(+) = D-ribulose 1,5-bisphosphate + CO2 + H2O. It catalyses the reaction D-ribulose 1,5-bisphosphate + O2 = 2-phosphoglycolate + (2R)-3-phosphoglycerate + 2 H(+). Its function is as follows. RuBisCO catalyzes two reactions: the carboxylation of D-ribulose 1,5-bisphosphate, the primary event in carbon dioxide fixation, as well as the oxidative fragmentation of the pentose substrate in the photorespiration process. Both reactions occur simultaneously and in competition at the same active site. This is Ribulose bisphosphate carboxylase large chain from Combretum indicum (Rangoon creeper).